A 169-amino-acid polypeptide reads, in one-letter code: S-ribosylhomocysteine lyase (169 aa).

Fe cation is bound by residues His-54, His-58, and Cys-128.

Belongs to the LuxS family. Homodimer. The cofactor is Fe cation.

It carries out the reaction S-(5-deoxy-D-ribos-5-yl)-L-homocysteine = (S)-4,5-dihydroxypentane-2,3-dione + L-homocysteine. Functionally, involved in the synthesis of autoinducer 2 (AI-2) which is secreted by bacteria and is used to communicate both the cell density and the metabolic potential of the environment. The regulation of gene expression in response to changes in cell density is called quorum sensing. Catalyzes the transformation of S-ribosylhomocysteine (RHC) to homocysteine (HC) and 4,5-dihydroxy-2,3-pentadione (DPD). This is S-ribosylhomocysteine lyase from Psychromonas ingrahamii (strain DSM 17664 / CCUG 51855 / 37).